The primary structure comprises 542 residues: Protein OS-9 homolog (542 aa).

The N-terminal stretch at 1 to 21 (MQAKIIYALSAISALIPLGSS) is a signal peptide. 2 N-linked (GlcNAc...) asparagine glycosylation sites follow: N52 and N74. Disulfide bonds link C70–C258, C117–C130, C193–C227, and C208–C239. The region spanning 115 to 241 (ERCIFYQAGF…QVTIPELCNL (127 aa)) is the MRH domain. A mannooligosaccharide derivative-binding residues include W125, Q137, D194, R200, E223, and Y229. N380 carries an N-linked (GlcNAc...) asparagine glycan. Residues 497 to 528 (NARMDDDESTSHTTRDIGEAGSQTTGNTESEV) are disordered. Residues 505–514 (STSHTTRDIG) are compositionally biased toward basic and acidic residues. The segment covering 517 to 528 (GSQTTGNTESEV) has biased composition (polar residues). Residues 539-542 (HDEL) carry the Prevents secretion from ER motif.

The protein belongs to the OS-9 family. As to quaternary structure, homodimer. Component of the HRD1 ubiquitin ligase complex which contains the E3 ligase HRD1, its cofactors HRD3, USA1 and DER1, substrate recruiting factor YOS9 and CDC48-binding protein UBX2. Within the complex, interacts (via N-terminus) with HRD3. In ERAD-L, HRD3 and YOS9 jointly bind misfolded glycoproteins in the endoplasmic reticulum (ER) lumen. Movement of ERAD-L substrates through the ER membrane is facilitated by HRD1 and DER1 which have lateral gates facing each other and which distort the membrane region between the lateral gates, making it much thinner than a normal phospholipid bilayer. Substrates insert into the membrane as a hairpin loop with one strand interacting with DER1 and the other with HRD1. The HRD1 complex interacts with the heterotrimeric CDC48-NPL4-UFD1 ATPase complex which is recruited by UBX2 via its interaction with CDC48 and which moves ubiquitinated substrates to the cytosol for targeting to the proteasome. Interacts with KAR2 and EMP47. Interacts with misfolded ER lumenal proteins like PCR1. Interacts with the GPI-anchored proteins GAS1 and MKC7.

It is found in the endoplasmic reticulum membrane. Functionally, lectin involved in the quality control of the secretory pathway. As a member of the endoplasmic reticulum-associated degradation lumenal (ERAD-L) surveillance system, targets misfolded endoplasmic reticulum lumenal glycoproteins for degradation. The recognition of targets is N-glycan specific. Functions in recruiting misfolded protein substrates in conjunction with HRD3. In Saccharomyces cerevisiae (strain ATCC 204508 / S288c) (Baker's yeast), this protein is Protein OS-9 homolog (YOS9).